The chain runs to 234 residues: Small ribosomal subunit protein uS2 (234 aa).

The protein belongs to the universal ribosomal protein uS2 family.

This Prochlorococcus marinus (strain AS9601) protein is Small ribosomal subunit protein uS2.